The chain runs to 60 residues: Cytotoxin SP15a (60 aa).

4 disulfide bridges follow: C3–C21, C14–C38, C42–C53, and C54–C59.

Belongs to the three-finger toxin family. Short-chain subfamily. Type IA cytotoxin sub-subfamily. As to quaternary structure, monomer in solution; Homodimer and oligomer in the presence of negatively charged lipids forming a pore with a size ranging between 20 and 30 Angstroms. In terms of tissue distribution, expressed by the venom gland.

The protein resides in the secreted. It localises to the target cell membrane. In terms of biological role, shows cytolytic activity on many different cells by forming pore in lipid membranes. In vivo, increases heart rate or kills the animal by cardiac arrest. In addition, it binds to heparin with high affinity, interacts with Kv channel-interacting protein 1 (KCNIP1) in a calcium-independent manner, and binds to integrin alpha-V/beta-3 (ITGAV/ITGB3) with moderate affinity. This Naja atra (Chinese cobra) protein is Cytotoxin SP15a.